A 262-amino-acid chain; its full sequence is Shikimate dehydrogenase (NADP(+)) (262 aa).

Shikimate-binding positions include 15-17 (SRS) and Thr62. Catalysis depends on Lys66, which acts as the Proton acceptor. Residue Glu78 coordinates NADP(+). Positions 87 and 102 each coordinate shikimate. NADP(+)-binding positions include 126-130 (GAGGA), 150-155 (NRTQQR), and Met214. Tyr216 is a binding site for shikimate. Gly236 is an NADP(+) binding site.

It belongs to the shikimate dehydrogenase family. As to quaternary structure, homodimer.

The enzyme catalyses shikimate + NADP(+) = 3-dehydroshikimate + NADPH + H(+). The protein operates within metabolic intermediate biosynthesis; chorismate biosynthesis; chorismate from D-erythrose 4-phosphate and phosphoenolpyruvate: step 4/7. Its function is as follows. Involved in the biosynthesis of the chorismate, which leads to the biosynthesis of aromatic amino acids. Catalyzes the reversible NADPH linked reduction of 3-dehydroshikimate (DHSA) to yield shikimate (SA). The chain is Shikimate dehydrogenase (NADP(+)) from Acinetobacter baylyi (strain ATCC 33305 / BD413 / ADP1).